Consider the following 690-residue polypeptide: uncharacterized protein (690 aa).

This is an uncharacterized protein from Acanthamoeba polyphaga mimivirus (APMV).